Here is a 335-residue protein sequence, read N- to C-terminus: Glycerol-3-phosphate dehydrogenase [NAD(P)+] (335 aa).

An NADPH-binding site is contributed by lysine 109. Positions 109, 141, and 143 each coordinate sn-glycerol 3-phosphate. Alanine 145 serves as a coordination point for NADPH. Positions 196, 249, 259, 260, and 261 each coordinate sn-glycerol 3-phosphate. The active-site Proton acceptor is the lysine 196. Position 260 (arginine 260) interacts with NADPH. Glutamate 283 lines the NADPH pocket.

It belongs to the NAD-dependent glycerol-3-phosphate dehydrogenase family.

The protein resides in the cytoplasm. The enzyme catalyses sn-glycerol 3-phosphate + NAD(+) = dihydroxyacetone phosphate + NADH + H(+). It catalyses the reaction sn-glycerol 3-phosphate + NADP(+) = dihydroxyacetone phosphate + NADPH + H(+). The protein operates within membrane lipid metabolism; glycerophospholipid metabolism. Its function is as follows. Catalyzes the reduction of the glycolytic intermediate dihydroxyacetone phosphate (DHAP) to sn-glycerol 3-phosphate (G3P), the key precursor for phospholipid synthesis. The chain is Glycerol-3-phosphate dehydrogenase [NAD(P)+] from Mycoplasma mobile (strain ATCC 43663 / 163K / NCTC 11711) (Mesomycoplasma mobile).